The chain runs to 276 residues: Rhomboid protease GlpG (276 aa).

Transmembrane regions (helical) follow at residues 94-114, 142-162, 169-189, 192-212, 229-249, and 250-270; these read GPVTWVMMIACVVVFIAMQIL, ALMHFSLMHILFNLLWWWYLG, LGSGKLIVITLISALLSGYVQ, FSGPWFGGLSGVVYALMGYVW, LIIFALIWIVAGWFDLFGMSM, and ANGAHIAGLAVGLAMAFVDSL. The Nucleophile role is filled by serine 201. Histidine 254 is a catalytic residue.

Belongs to the peptidase S54 family.

The protein resides in the cell inner membrane. It carries out the reaction Cleaves type-1 transmembrane domains using a catalytic dyad composed of serine and histidine that are contributed by different transmembrane domains.. Functionally, rhomboid-type serine protease that catalyzes intramembrane proteolysis. The polypeptide is Rhomboid protease GlpG (Escherichia coli O7:K1 (strain IAI39 / ExPEC)).